The primary structure comprises 238 residues: MEPGLWLLFGLTVTSAAGFVPCSQSGDAGRRGVSQAPTAARSEGDCEETVAGPGEETVAGPGEGTVAPTALQGPSPGSPGQEQAAEGAPEHHRSRRCTCFTYKDKECVYYCHLDIIWINTPEQTVPYGLSNYRGSFRGKRSAGPLPGNLQLSHRPHLRCACVGRYDKACLHFCTQTLDVSSNSRTAEKTDKEEEGKVEVKDQQSKQALDLHHPKLMPGSGLALAPSTCPRCLFQEGAP.

A signal peptide spans 1-16 (MEPGLWLLFGLTVTSA). A propeptide spanning residues 17 to 94 (AGFVPCSQSG…AEGAPEHHRS (78 aa)) is cleaved from the precursor. The disordered stretch occupies residues 24 to 89 (QSGDAGRRGV…GQEQAAEGAP (66 aa)). Intrachain disulfides connect C97–C111 and C99–C107. The propeptide occupies 118–238 (INTPEQTVPY…PRCLFQEGAP (121 aa)). The tract at residues 159-173 (CACVGRYDKACLHFC) is endothelin-like. Positions 183–219 (SRTAEKTDKEEEGKVEVKDQQSKQALDLHHPKLMPGS) are disordered. Residues 185–212 (TAEKTDKEEEGKVEVKDQQSKQALDLHH) show a composition bias toward basic and acidic residues.

This sequence belongs to the endothelin/sarafotoxin family. In terms of tissue distribution, expressed in trophoblasts and placental stem villi vessels, but not in cultured placental smooth muscle cells.

The protein localises to the secreted. Endothelins are endothelium-derived vasoconstrictor peptides. This chain is Endothelin-3 (EDN3), found in Homo sapiens (Human).